Consider the following 618-residue polypeptide: Sulfite reductase [NADPH] flavoprotein alpha-component (618 aa).

Residues 64–202 (VTLISASQTG…QAQQWRQQVV (139 aa)) form the Flavodoxin-like domain. FMN is bound by residues 70-75 (SQTGNA), 117-120 (STQG), and 153-162 (LGDTSYEHFC). In terms of domain architecture, FAD-binding FR-type spans 253-467 (TAPLTAQLSV…IEHNDNFRLP (215 aa)). Residues Thr341, Lys375, 405 to 408 (RLYS), 423 to 425 (TVG), Tyr429, and 438 to 441 (GGAS) contribute to the FAD site. NADP(+) is bound by residues 538–539 (SR), 544–548 (KIYVQ), and Asp580. Residue Tyr618 participates in FAD binding.

This sequence belongs to the NADPH-dependent sulphite reductase flavoprotein subunit CysJ family. In the N-terminal section; belongs to the flavodoxin family. The protein in the C-terminal section; belongs to the flavoprotein pyridine nucleotide cytochrome reductase family. As to quaternary structure, alpha(8)-beta(8). The alpha component is a flavoprotein, the beta component is a hemoprotein. The cofactor is FAD. FMN is required as a cofactor.

It carries out the reaction hydrogen sulfide + 3 NADP(+) + 3 H2O = sulfite + 3 NADPH + 4 H(+). It participates in sulfur metabolism; hydrogen sulfide biosynthesis; hydrogen sulfide from sulfite (NADPH route): step 1/1. Component of the sulfite reductase complex that catalyzes the 6-electron reduction of sulfite to sulfide. This is one of several activities required for the biosynthesis of L-cysteine from sulfate. The flavoprotein component catalyzes the electron flow from NADPH -&gt; FAD -&gt; FMN to the hemoprotein component. The protein is Sulfite reductase [NADPH] flavoprotein alpha-component of Yersinia pseudotuberculosis serotype I (strain IP32953).